The chain runs to 183 residues: TATA-box-binding protein (183 aa).

2 consecutive repeat copies span residues 7-83 (IENV…ARTL) and 99-177 (VQNI…RQQL).

This sequence belongs to the TBP family.

Functionally, general factor that plays a role in the activation of archaeal genes transcribed by RNA polymerase. Binds specifically to the TATA box promoter element which lies close to the position of transcription initiation. The protein is TATA-box-binding protein of Methanothrix thermoacetophila (strain DSM 6194 / JCM 14653 / NBRC 101360 / PT) (Methanosaeta thermophila).